The following is a 348-amino-acid chain: Aminotransferase atnJ (348 aa).

Pyridoxal 5'-phosphate is bound at residue Arg-79. At Lys-180 the chain carries N6-(pyridoxal phosphate)lysine. Position 216 (Glu-216) interacts with pyridoxal 5'-phosphate.

The protein belongs to the class-IV pyridoxal-phosphate-dependent aminotransferase family. The cofactor is pyridoxal 5'-phosphate.

Its pathway is secondary metabolite biosynthesis. Functionally, aminotransferase; part of the gene cluster that mediates the biosynthesis of aspercryptins, linear lipopeptides built from six amino acids including 2 highly unusual and nonproteogenic amino acids, 2-amino-octanoic acid (2aoa) and 2-amino-dodecanol (2adol). The core structure of aspercryptins is as follows: Ser/Ala-Thr-Ile/Val-2aoa-Asn-2adol. The first step of aspercryptin biosynthesis is the generation of the fatty acid precursors, octanoic and dodecanoic acids, by the FAS subunits atnF and atnM. The fatty acid precursors are likely transformed into the corresponding alpha-amino fatty acids in three steps. First, they are hydroxylated by the cytochrome P450 monooxygenase atnE, then oxidized to the corresponding alpha-keto acids by the NAD(P)-dependent oxidoreductase atnD, and finally converted to the alpha-amino fatty acids by the PLP-dependent aminotransferases atnH or atnJ. the alpha-amino fatty acids, 2-amino-octanoic and 2-amino-dodecanoic acids, are recognized, activated, and covalently tethered to the NRPS atnA by its fourth and sixth adenylation domains. The second module of atnA is the Thr module and contains an epimerase (E) domain responsible for the epimerization of Thr to D-allo-Thr. Additionally, despite atnA having only one epimerase domain, the first amino acid of aspercryptin A1 is D-Ser, suggesting that serine is either loaded directly as D-Ser on the first module or that the epimerase domain in the threonine module epimerizes both L-Ser and L-Thr. After condensation of the hexapeptide of aspercryptin, the C-terminal reductase (TE) domain might be involved in the reductive release and production of the aldehyde hexapeptide. Further reduction would generate aspercryptins. The variety of aspercryptins produced reflects the flexibility of the atnA NRPS, allowing incorporation of alanine instead of serine, valine for isoleucine, and a C10 fatty amino alcohol instead of the C12 version. AtnB seems to be involved in the selectivity for Ile versus Val by the third module. Moreover, type B, C and D aspercryptins have an additional N-terminal cichorine, acetyl and propionyl group respectively. The protein is Aminotransferase atnJ of Emericella nidulans (strain FGSC A4 / ATCC 38163 / CBS 112.46 / NRRL 194 / M139) (Aspergillus nidulans).